The following is a 266-amino-acid chain: Small ribosomal subunit protein uS3 (266 aa).

The KH type-2 domain occupies 39–107 (VREYLKKKLK…PVHVNIEEIR (69 aa)). Residues 218 to 266 (EVAEDKRPRRNARPGDRRPRRDGEGGAPGARRGAPRRGAGKPEDGKTGE) form a disordered region. 2 stretches are compositionally biased toward basic and acidic residues: residues 230 to 241 (RPGDRRPRRDGE) and 257 to 266 (GKPEDGKTGE).

This sequence belongs to the universal ribosomal protein uS3 family. As to quaternary structure, part of the 30S ribosomal subunit. Forms a tight complex with proteins S10 and S14.

Binds the lower part of the 30S subunit head. Binds mRNA in the 70S ribosome, positioning it for translation. The polypeptide is Small ribosomal subunit protein uS3 (Burkholderia ambifaria (strain MC40-6)).